The chain runs to 220 residues: 6-phosphogluconolactonase (220 aa).

The protein belongs to the glucosamine/galactosamine-6-phosphate isomerase family. 6-phosphogluconolactonase subfamily.

The catalysed reaction is 6-phospho-D-glucono-1,5-lactone + H2O = 6-phospho-D-gluconate + H(+). It participates in carbohydrate degradation; pentose phosphate pathway; D-ribulose 5-phosphate from D-glucose 6-phosphate (oxidative stage): step 2/3. Its function is as follows. Hydrolysis of 6-phosphogluconolactone to 6-phosphogluconate. The polypeptide is 6-phosphogluconolactonase (pgl) (Thermotoga maritima (strain ATCC 43589 / DSM 3109 / JCM 10099 / NBRC 100826 / MSB8)).